Consider the following 2313-residue polypeptide: Protein Ycf2 (2313 aa).

Position 1606–1613 (1606–1613) interacts with ATP; sequence GSMETGRS.

This sequence belongs to the Ycf2 family.

Its subcellular location is the plastid. The protein localises to the chloroplast stroma. Functionally, probable ATPase of unknown function. Its presence in a non-photosynthetic plant (Epifagus virginiana) and experiments in tobacco indicate that it has an essential function which is probably not related to photosynthesis. In Psilotum nudum (Whisk fern), this protein is Protein Ycf2.